The following is a 117-amino-acid chain: B-enzyme (117 aa).

Asp89 is a catalytic residue.

The catalysed reaction is Hydrolysis of (1-&gt;4)-beta-linkages between N-acetylmuramic acid and N-acetyl-D-glucosamine residues in a peptidoglycan and between N-acetyl-D-glucosamine residues in chitodextrins.. In Bacillus subtilis, this protein is B-enzyme (lyzB).